Here is a 321-residue protein sequence, read N- to C-terminus: ATP-dependent 6-phosphofructokinase (321 aa).

Residue G12 participates in ATP binding. ADP contacts are provided by residues 22–26 (RGVVR) and 55–60 (RYSVSD). ATP is bound by residues 73 to 74 (RF) and 103 to 106 (GDGS). D104 lines the Mg(2+) pocket. 127-129 (TID) is a binding site for substrate. D129 serves as the catalytic Proton acceptor. An ADP-binding site is contributed by R156. Substrate is bound by residues R164 and 171 to 173 (MGR). ADP contacts are provided by residues 187–189 (GCE), K213, and 215–217 (KRH). Residues E224, R245, and 251–254 (HIQR) contribute to the substrate site.

The protein belongs to the phosphofructokinase type A (PFKA) family. ATP-dependent PFK group I subfamily. Prokaryotic clade 'B1' sub-subfamily. As to quaternary structure, homotetramer. Mg(2+) serves as cofactor.

It is found in the cytoplasm. It catalyses the reaction beta-D-fructose 6-phosphate + ATP = beta-D-fructose 1,6-bisphosphate + ADP + H(+). It functions in the pathway carbohydrate degradation; glycolysis; D-glyceraldehyde 3-phosphate and glycerone phosphate from D-glucose: step 3/4. With respect to regulation, allosterically activated by ADP and other diphosphonucleosides, and allosterically inhibited by phosphoenolpyruvate. In terms of biological role, catalyzes the phosphorylation of D-fructose 6-phosphate to fructose 1,6-bisphosphate by ATP, the first committing step of glycolysis. The chain is ATP-dependent 6-phosphofructokinase from Histophilus somni (strain 129Pt) (Haemophilus somnus).